Consider the following 275-residue polypeptide: Dermonecrotic toxin LarSicTox-alphaIII1 (275 aa).

His5 is a catalytic residue. Mg(2+) is bound by residues Glu25 and Asp27. His41 acts as the Nucleophile in catalysis. 2 disulfide bridges follow: Cys45–Cys51 and Cys47–Cys190. Asp85 is a binding site for Mg(2+). The N-linked (GlcNAc...) asparagine glycan is linked to Asn252.

Belongs to the arthropod phospholipase D family. Class II subfamily. Requires Mg(2+) as cofactor. In terms of tissue distribution, expressed by the venom gland.

It is found in the secreted. The catalysed reaction is an N-(acyl)-sphingosylphosphocholine = an N-(acyl)-sphingosyl-1,3-cyclic phosphate + choline. The enzyme catalyses an N-(acyl)-sphingosylphosphoethanolamine = an N-(acyl)-sphingosyl-1,3-cyclic phosphate + ethanolamine. It carries out the reaction a 1-acyl-sn-glycero-3-phosphocholine = a 1-acyl-sn-glycero-2,3-cyclic phosphate + choline. It catalyses the reaction a 1-acyl-sn-glycero-3-phosphoethanolamine = a 1-acyl-sn-glycero-2,3-cyclic phosphate + ethanolamine. Functionally, dermonecrotic toxins cleave the phosphodiester linkage between the phosphate and headgroup of certain phospholipids (sphingolipid and lysolipid substrates), forming an alcohol (often choline) and a cyclic phosphate. This toxin acts on sphingomyelin (SM). It may also act on ceramide phosphoethanolamine (CPE), lysophosphatidylcholine (LPC) and lysophosphatidylethanolamine (LPE), but not on lysophosphatidylserine (LPS), and lysophosphatidylglycerol (LPG). It acts by transphosphatidylation, releasing exclusively cyclic phosphate products as second products. Induces dermonecrosis, hemolysis, increased vascular permeability, edema, inflammatory response, and platelet aggregation. The protein is Dermonecrotic toxin LarSicTox-alphaIII1 of Loxosceles arizonica (Arizona brown spider).